Consider the following 428-residue polypeptide: MTGKSVRDVERYQAVLGSLLSEEENKYCADCQAKGPRWASWNIGVFICIRCAGIHRNLGVHISRVKSVNLDQWTQEQIQCMQEMGNGKANRLYEAFLPENFRRPQTDQAVEGFIRDKYEKKKYMDRSIDINTFRKEKDDKWKKSNEPVSERKLEPIVFEKVKMPQKKEETQQSRKSSPKSTEPVIDLLGLDAPVPSTLTNGRPCSLEKDLDLFASVGLNSDSRKVSGSMPTSGSAGSVPENLNLFPEPGGKGEEAGKKQLSKDSILSLYGSQTPQLPAQGAMFMAPAQMAYPAAAYTSFPGVPPSSSMMGGMMAPSVGVMAQHGAAGMVTPMAIPAGYVGNVQAAVIGVPNGMMAAQQAGYVAGMAAVPQPVYGVQPAQQLQWNITQMTQQMAGMNFYGANGVMGYGQSMGGGGAQGSNQSLSTQLWK.

The Arf-GAP domain maps to 13 to 139 (QAVLGSLLSE…INTFRKEKDD (127 aa)). Residues 28–51 (CADCQAKGPRWASWNIGVFICIRC) form a C4-type zinc finger. The span at 161–172 (VKMPQKKEETQQ) shows a compositional bias: basic and acidic residues. 2 disordered regions span residues 161–182 (VKMP…KSTE) and 222–258 (SRKV…AGKK).

May interact with clathrin heavy chains.

Functionally, GTPase activating protein. May play a role in clathrin-dependent retrograde transport from early endosomes to the trans-Golgi network. The polypeptide is Stromal membrane-associated protein 2 (SMAP2) (Gallus gallus (Chicken)).